Here is a 724-residue protein sequence, read N- to C-terminus: Phosphoribosylformylglycinamidine synthase subunit PurL (724 aa).

Residue His34 is part of the active site. Tyr37 contributes to the ATP binding site. Glu78 serves as a coordination point for Mg(2+). Substrate is bound by residues 79–82 (SHNH) and Arg101. His80 (proton acceptor) is an active-site residue. Position 102 (Asp102) interacts with Mg(2+). A substrate-binding site is contributed by Gln226. A Mg(2+)-binding site is contributed by Asp254. 298 to 300 (ESQ) provides a ligand contact to substrate. ATP-binding residues include Asp480 and Gly517. Asn518 is a binding site for Mg(2+). A substrate-binding site is contributed by Ser520.

This sequence belongs to the FGAMS family. In terms of assembly, monomer. Part of the FGAM synthase complex composed of 1 PurL, 1 PurQ and 2 PurS subunits.

It is found in the cytoplasm. The catalysed reaction is N(2)-formyl-N(1)-(5-phospho-beta-D-ribosyl)glycinamide + L-glutamine + ATP + H2O = 2-formamido-N(1)-(5-O-phospho-beta-D-ribosyl)acetamidine + L-glutamate + ADP + phosphate + H(+). Its pathway is purine metabolism; IMP biosynthesis via de novo pathway; 5-amino-1-(5-phospho-D-ribosyl)imidazole from N(2)-formyl-N(1)-(5-phospho-D-ribosyl)glycinamide: step 1/2. Part of the phosphoribosylformylglycinamidine synthase complex involved in the purines biosynthetic pathway. Catalyzes the ATP-dependent conversion of formylglycinamide ribonucleotide (FGAR) and glutamine to yield formylglycinamidine ribonucleotide (FGAM) and glutamate. The FGAM synthase complex is composed of three subunits. PurQ produces an ammonia molecule by converting glutamine to glutamate. PurL transfers the ammonia molecule to FGAR to form FGAM in an ATP-dependent manner. PurS interacts with PurQ and PurL and is thought to assist in the transfer of the ammonia molecule from PurQ to PurL. In Methanopyrus kandleri (strain AV19 / DSM 6324 / JCM 9639 / NBRC 100938), this protein is Phosphoribosylformylglycinamidine synthase subunit PurL.